Reading from the N-terminus, the 102-residue chain is Synaptobrevin-like protein 5 (102 aa).

The region spanning 17–77 (KIMRTRRELD…VKIKREMSWK (61 aa)) is the v-SNARE coiled-coil homology domain.

The polypeptide is Synaptobrevin-like protein 5 (snb-5) (Caenorhabditis elegans).